A 457-amino-acid chain; its full sequence is Tubulin beta chain (457 aa).

GTP contacts are provided by Gln11, Glu69, Ser138, Gly142, Thr143, Gly144, Asn204, and Asn226. Glu69 is a binding site for Mg(2+). A phosphoserine mark is found at Ser278 and Ser280. The segment at 423–457 (QQYQEATVEDDEEVDENGDFGAPQNQDEPITENFE) is disordered. A compositionally biased stretch (acidic residues) spans 429-440 (TVEDDEEVDENG).

It belongs to the tubulin family. As to quaternary structure, dimer of alpha and beta chains. A typical microtubule is a hollow water-filled tube with an outer diameter of 25 nm and an inner diameter of 15 nM. Alpha-beta heterodimers associate head-to-tail to form protofilaments running lengthwise along the microtubule wall with the beta-tubulin subunit facing the microtubule plus end conferring a structural polarity. Microtubules usually have 13 protofilaments but different protofilament numbers can be found in some organisms and specialized cells. The cofactor is Mg(2+).

The protein localises to the cytoplasm. Its subcellular location is the cytoskeleton. Tubulin is the major constituent of microtubules, a cylinder consisting of laterally associated linear protofilaments composed of alpha- and beta-tubulin heterodimers. Microtubules grow by the addition of GTP-tubulin dimers to the microtubule end, where a stabilizing cap forms. Below the cap, tubulin dimers are in GDP-bound state, owing to GTPase activity of alpha-tubulin. This is Tubulin beta chain (TUB2) from Saccharomyces cerevisiae (strain ATCC 204508 / S288c) (Baker's yeast).